Here is a 125-residue protein sequence, read N- to C-terminus: Cu-Zn superoxide dismutase-like protein (125 aa).

An intrachain disulfide couples Cys-52 to Cys-102.

The protein belongs to the Cu-Zn superoxide dismutase family.

The protein localises to the host cytoplasm. Functionally, virion protein with no enzymatic activity. The sequence is that of Cu-Zn superoxide dismutase-like protein from Camelpox virus (strain M-96).